A 763-amino-acid polypeptide reads, in one-letter code: Phosphoglycerol transferase I (763 aa).

4 helical membrane passes run 4 to 19, 26 to 48, 76 to 98, and 110 to 132; these read LLSV…IYAW, WWFA…LYAS, YILP…GWVL, and YSLL…RQIT.

It belongs to the OpgB family.

It is found in the cell inner membrane. The catalysed reaction is a phosphatidylglycerol + a membrane-derived-oligosaccharide D-glucose = a 1,2-diacyl-sn-glycerol + a membrane-derived-oligosaccharide 6-(glycerophospho)-D-glucose.. It participates in glycan metabolism; osmoregulated periplasmic glucan (OPG) biosynthesis. Functionally, transfers a phosphoglycerol residue from phosphatidylglycerol to the membrane-bound nascent glucan backbones. The sequence is that of Phosphoglycerol transferase I from Salmonella typhi.